Reading from the N-terminus, the 256-residue chain is Trans-aconitate 2-methyltransferase (256 aa).

This sequence belongs to the methyltransferase superfamily. Tam family.

The protein localises to the cytoplasm. It carries out the reaction trans-aconitate + S-adenosyl-L-methionine = (E)-3-(methoxycarbonyl)pent-2-enedioate + S-adenosyl-L-homocysteine. Catalyzes the S-adenosylmethionine monomethyl esterification of trans-aconitate. The sequence is that of Trans-aconitate 2-methyltransferase from Afipia carboxidovorans (strain ATCC 49405 / DSM 1227 / KCTC 32145 / OM5) (Oligotropha carboxidovorans).